We begin with the raw amino-acid sequence, 140 residues long: Ergosterol biosynthetic protein 28 homolog (140 aa).

Helical transmembrane passes span 4–24, 52–72, 79–99, and 105–125; these read FLNV…GNTL, TFGI…IDIH, ITLW…FVFG, and VGVL…LVGL.

This sequence belongs to the ERG28 family.

The protein resides in the endoplasmic reticulum membrane. This is Ergosterol biosynthetic protein 28 homolog from Mus musculus (Mouse).